Reading from the N-terminus, the 101-residue chain is NAD(P)H-quinone oxidoreductase subunit 4L, chloroplastic (101 aa).

3 helical membrane passes run 2–22 (MLEHVLVLSAYLFSIGIYGLI), 32–52 (MCLELILNAVNLNFVTFSDFF), and 61–81 (IFSIFVIAIAAAEAAIGPAIV).

This sequence belongs to the complex I subunit 4L family. In terms of assembly, NDH is composed of at least 16 different subunits, 5 of which are encoded in the nucleus.

It is found in the plastid. Its subcellular location is the chloroplast thylakoid membrane. It catalyses the reaction a plastoquinone + NADH + (n+1) H(+)(in) = a plastoquinol + NAD(+) + n H(+)(out). The catalysed reaction is a plastoquinone + NADPH + (n+1) H(+)(in) = a plastoquinol + NADP(+) + n H(+)(out). Its function is as follows. NDH shuttles electrons from NAD(P)H:plastoquinone, via FMN and iron-sulfur (Fe-S) centers, to quinones in the photosynthetic chain and possibly in a chloroplast respiratory chain. The immediate electron acceptor for the enzyme in this species is believed to be plastoquinone. Couples the redox reaction to proton translocation, and thus conserves the redox energy in a proton gradient. The protein is NAD(P)H-quinone oxidoreductase subunit 4L, chloroplastic of Manihot esculenta (Cassava).